The primary structure comprises 547 residues: Chaperonin GroEL (547 aa).

ATP contacts are provided by residues 30-33 (TLGP), K51, 87-91 (DGTTT), G415, 478-480 (NAA), and D494.

Belongs to the chaperonin (HSP60) family. As to quaternary structure, forms a cylinder of 14 subunits composed of two heptameric rings stacked back-to-back. Interacts with the co-chaperonin GroES.

It is found in the cytoplasm. It catalyses the reaction ATP + H2O + a folded polypeptide = ADP + phosphate + an unfolded polypeptide.. Its function is as follows. Together with its co-chaperonin GroES, plays an essential role in assisting protein folding. The GroEL-GroES system forms a nano-cage that allows encapsulation of the non-native substrate proteins and provides a physical environment optimized to promote and accelerate protein folding. The sequence is that of Chaperonin GroEL from Geobacter sp. (strain M21).